The primary structure comprises 330 residues: Lipoyl synthase (330 aa).

Cys-77, Cys-82, Cys-88, Cys-103, Cys-107, Cys-110, and Ser-317 together coordinate [4Fe-4S] cluster. Residues 89-306 (FNHGTATFMI…RSEAEKMGFE (218 aa)) form the Radical SAM core domain.

The protein belongs to the radical SAM superfamily. Lipoyl synthase family. It depends on [4Fe-4S] cluster as a cofactor.

Its subcellular location is the cytoplasm. The catalysed reaction is [[Fe-S] cluster scaffold protein carrying a second [4Fe-4S](2+) cluster] + N(6)-octanoyl-L-lysyl-[protein] + 2 oxidized [2Fe-2S]-[ferredoxin] + 2 S-adenosyl-L-methionine + 4 H(+) = [[Fe-S] cluster scaffold protein] + N(6)-[(R)-dihydrolipoyl]-L-lysyl-[protein] + 4 Fe(3+) + 2 hydrogen sulfide + 2 5'-deoxyadenosine + 2 L-methionine + 2 reduced [2Fe-2S]-[ferredoxin]. The protein operates within protein modification; protein lipoylation via endogenous pathway; protein N(6)-(lipoyl)lysine from octanoyl-[acyl-carrier-protein]: step 2/2. Its function is as follows. Catalyzes the radical-mediated insertion of two sulfur atoms into the C-6 and C-8 positions of the octanoyl moiety bound to the lipoyl domains of lipoate-dependent enzymes, thereby converting the octanoylated domains into lipoylated derivatives. The sequence is that of Lipoyl synthase from Haemophilus ducreyi (strain 35000HP / ATCC 700724).